Consider the following 174-residue polypeptide: RNA pyrophosphohydrolase (174 aa).

One can recognise a Nudix hydrolase domain in the interval 6-145 (GYRPNVGMII…KRRVYWQALQ (140 aa)). A Nudix box motif is present at residues 38–59 (GGIDYAETPEQAMFRELEEEVG).

This sequence belongs to the Nudix hydrolase family. RppH subfamily. The cofactor is a divalent metal cation.

Functionally, accelerates the degradation of transcripts by removing pyrophosphate from the 5'-end of triphosphorylated RNA, leading to a more labile monophosphorylated state that can stimulate subsequent ribonuclease cleavage. The chain is RNA pyrophosphohydrolase from Acidithiobacillus ferrooxidans (strain ATCC 53993 / BNL-5-31) (Leptospirillum ferrooxidans (ATCC 53993)).